A 452-amino-acid polypeptide reads, in one-letter code: MATSSLKLTSACFVLLFIFVGCVLTATNLRNNEISRSRKLKTEDSKSFNSSPMTTRLDGVVELNEHAVTDPDKVAHEVSNLIHMSEQNITARRKLGFFSCGNGNLIDDCWRCDRNWNKNRKHLADCGMGFGSKAFGGRNGSYYVVTDHSDDDVVNPKPGTLRHAVIQVEPLWIIFKRDMVIKLKQELIMNSFKTIDARGANVHIANGACITIQNITNVIVHGLHIHDCKRTGNVTVRSSPSQAGFRGTADGDAINIFGSSHIWIDHNSLSNCTDGLVDVVNGSTAITISNNHFTHHDEVMLLGHNDSYTRDKMMQVTVAYNHFGEGLIQRMPRCRHGYFHVVNNDYTHWKMYAIGGSANPTINSQGNRFAAPKNHSAKEVTKRLDTKGNEWMEWNWRSEKDLLVNGAFFTPSGEGASGDSQTLSLPAKPASMVDAITASAGALSCRRGKPCY.

The first 25 residues, 1–25 (MATSSLKLTSACFVLLFIFVGCVLT), serve as a signal peptide directing secretion. N-linked (GlcNAc...) asparagine glycans are attached at residues Asn88, Asn139, Asn214, and Asn233. Asp250 serves as a coordination point for Ca(2+). Asn271 is a glycosylation site (N-linked (GlcNAc...) asparagine). Asp274 and Asp278 together coordinate Ca(2+). Residues Asn281 and Asn305 are each glycosylated (N-linked (GlcNAc...) asparagine). Residue Arg330 is part of the active site. Residue Asn374 is glycosylated (N-linked (GlcNAc...) asparagine).

Belongs to the polysaccharide lyase 1 family. It depends on Ca(2+) as a cofactor.

The enzyme catalyses Eliminative cleavage of (1-&gt;4)-alpha-D-galacturonan to give oligosaccharides with 4-deoxy-alpha-D-galact-4-enuronosyl groups at their non-reducing ends.. It participates in glycan metabolism; pectin degradation; 2-dehydro-3-deoxy-D-gluconate from pectin: step 2/5. The polypeptide is Probable pectate lyase 9 (Arabidopsis thaliana (Mouse-ear cress)).